The sequence spans 397 residues: Ribosomal RNA processing protein 1 homolog (397 aa).

Over residues 334-343 the composition is skewed to basic and acidic residues; the sequence is EAAEAARQEN. The tract at residues 334–366 is disordered; the sequence is EAAEAARQENGDDVPDDEIAEVKKGNGKKTAVP.

It belongs to the RRP1 family.

The protein resides in the nucleus. May be involved in the generation of 28S rRNA. This Caenorhabditis elegans protein is Ribosomal RNA processing protein 1 homolog.